Consider the following 183-residue polypeptide: Disulfide bond formation protein B 2 (183 aa).

At 1-9 (MSLACSRSL) the chain is on the cytoplasmic side. The helical transmembrane segment at 10-26 (FFMAFTAGILALGASYY) threads the bilayer. The Periplasmic portion of the chain corresponds to 27–44 (LEYAVGLVPCSLCLVQRL). Cysteines 36 and 39 form a disulfide. A helical transmembrane segment spans residues 45 to 61 (FMSVLTLCCGLAAVHGP). Topologically, residues 62–68 (QRVGLSL) are cytoplasmic. Residues 69 to 85 (YWMVTLLSSLGGTTAAW) form a helical membrane-spanning segment. At 86–142 (RQVLFQSDSLQELAHCAPNPEEMFSSLPWLCALMRMFNDTADCAELSWTLFDLSIPE) the chain is on the periplasmic side. C101 and C128 are disulfide-bonded. A helical membrane pass occupies residues 143–161 (WSLLFFVGMSILAVYQLLR). The Cytoplasmic segment spans residues 162-183 (QVWMALQRPLSGQPSHPALVRD).

Belongs to the DsbB family.

It localises to the cell inner membrane. Required for disulfide bond formation in some periplasmic proteins. Acts by oxidizing the DsbA protein. The chain is Disulfide bond formation protein B 2 from Pseudomonas fluorescens (strain Pf0-1).